The primary structure comprises 506 residues: Histidine ammonia-lyase (506 aa).

A cross-link (5-imidazolinone (Ala-Gly)) is located at residues 141 to 143 (ASG). Residue serine 142 is modified to 2,3-didehydroalanine (Ser).

Belongs to the PAL/histidase family. In terms of processing, contains an active site 4-methylidene-imidazol-5-one (MIO), which is formed autocatalytically by cyclization and dehydration of residues Ala-Ser-Gly.

The protein resides in the cytoplasm. It carries out the reaction L-histidine = trans-urocanate + NH4(+). It functions in the pathway amino-acid degradation; L-histidine degradation into L-glutamate; N-formimidoyl-L-glutamate from L-histidine: step 1/3. In Burkholderia multivorans (strain ATCC 17616 / 249), this protein is Histidine ammonia-lyase.